The primary structure comprises 197 residues: MKVLQEKILNEGKVLSGDVLKVDAFLNHQIDPVLMQEIGKEFAKRFKEENITKIVTIESSGIAPSVMAALELGVKVIFARKRKSLTLQDNMYVANVYSFTKQETNEISLSRNHIDENDRVLIIDDFLANGQAALGLMSLVEQAGASIAGIGIVIEKAFQDGGKKLREQGVRVESLAEIASLDNGTVTFVQQETAEVK.

Xanthine is bound by residues Leu20 and Asn27. Ala128–Ala132 lines the 5-phospho-alpha-D-ribose 1-diphosphate pocket. Residue Lys156 participates in xanthine binding.

It belongs to the purine/pyrimidine phosphoribosyltransferase family. Xpt subfamily. Homodimer.

The protein localises to the cytoplasm. The catalysed reaction is XMP + diphosphate = xanthine + 5-phospho-alpha-D-ribose 1-diphosphate. It functions in the pathway purine metabolism; XMP biosynthesis via salvage pathway; XMP from xanthine: step 1/1. In terms of biological role, converts the preformed base xanthine, a product of nucleic acid breakdown, to xanthosine 5'-monophosphate (XMP), so it can be reused for RNA or DNA synthesis. This Bacillus cereus (strain B4264) protein is Xanthine phosphoribosyltransferase.